The primary structure comprises 118 residues: Basic phospholipase A2 PA-15 (118 aa).

7 disulfide bridges follow: cysteine 11–cysteine 71, cysteine 27–cysteine 117, cysteine 29–cysteine 45, cysteine 44–cysteine 98, cysteine 51–cysteine 91, cysteine 60–cysteine 84, and cysteine 78–cysteine 89. Residues tyrosine 28, glycine 30, and glycine 32 each coordinate Ca(2+). Histidine 48 is a catalytic residue. Aspartate 49 lines the Ca(2+) pocket. Residue aspartate 92 is part of the active site.

Belongs to the phospholipase A2 family. Group I subfamily. D49 sub-subfamily. It depends on Ca(2+) as a cofactor. In terms of tissue distribution, expressed by the venom gland.

Its subcellular location is the secreted. It carries out the reaction a 1,2-diacyl-sn-glycero-3-phosphocholine + H2O = a 1-acyl-sn-glycero-3-phosphocholine + a fatty acid + H(+). Functionally, PLA2 catalyzes the calcium-dependent hydrolysis of the 2-acyl groups in 3-sn-phosphoglycerides. This Pseudechis australis (Mulga snake) protein is Basic phospholipase A2 PA-15.